A 264-amino-acid polypeptide reads, in one-letter code: Tropinone reductase homolog At5g06060 (264 aa).

15–39 (LVTGGTRGIGRAVVEELAKFGAKVH) is a binding site for NADP(+). S148 provides a ligand contact to substrate. Catalysis depends on Y161, which acts as the Proton acceptor.

This sequence belongs to the short-chain dehydrogenases/reductases (SDR) family. SDR65C subfamily.

This is Tropinone reductase homolog At5g06060 from Arabidopsis thaliana (Mouse-ear cress).